The sequence spans 1242 residues: DNA polymerase catalytic subunit (1242 aa).

Disordered regions lie at residues 14–38 (GAVA…RPPQ), 644–665 (LQSA…SSSS), 877–898 (EGDS…GGSN), and 1108–1163 (TAPQ…KPPS). A compositionally biased stretch (low complexity) spans 653 to 665 (GVSPGSGSNSSSS). Positions 1110–1119 (PQGSSDNGDS) are enriched in polar residues. The span at 1145 to 1155 (ESNRRGGEPAK) shows a compositional bias: basic and acidic residues.

Belongs to the DNA polymerase type-B family. In terms of assembly, forms a complex with the ssDNA-binding protein UL57, the DNA polymerase processivity factor UL44, and the alkaline exonuclease UL98. Interacts with the putative helicase-primase complex composed of UL70, UL102 and UL105 proteins; these interactions may coordinate leading and lagging strand DNA synthesis at the replication fork.

It is found in the host nucleus. It catalyses the reaction DNA(n) + a 2'-deoxyribonucleoside 5'-triphosphate = DNA(n+1) + diphosphate. Its function is as follows. Replicates viral genomic DNA in the late phase of lytic infection, producing long concatemeric DNA. The replication complex is composed of six viral proteins: the DNA polymerase, processivity factor, primase, primase-associated factor, helicase, and ssDNA-binding protein. The sequence is that of DNA polymerase catalytic subunit (UL54) from Homo sapiens (Human).